The following is a 148-amino-acid chain: 3-dehydroquinate dehydratase (148 aa).

The active-site Proton acceptor is the Tyr-26. Asn-77, His-83, and Asp-90 together coordinate substrate. The active-site Proton donor is His-103. Residues Leu-104–Ser-105 and Arg-114 contribute to the substrate site.

Belongs to the type-II 3-dehydroquinase family. In terms of assembly, homododecamer.

It carries out the reaction 3-dehydroquinate = 3-dehydroshikimate + H2O. The protein operates within metabolic intermediate biosynthesis; chorismate biosynthesis; chorismate from D-erythrose 4-phosphate and phosphoenolpyruvate: step 3/7. Functionally, catalyzes a trans-dehydration via an enolate intermediate. This is 3-dehydroquinate dehydratase (aroQ) from Pasteurella multocida (strain Pm70).